We begin with the raw amino-acid sequence, 100 residues long: Aspartyl/glutamyl-tRNA(Asn/Gln) amidotransferase subunit C (100 aa).

The protein belongs to the GatC family. As to quaternary structure, heterotrimer of A, B and C subunits.

It carries out the reaction L-glutamyl-tRNA(Gln) + L-glutamine + ATP + H2O = L-glutaminyl-tRNA(Gln) + L-glutamate + ADP + phosphate + H(+). It catalyses the reaction L-aspartyl-tRNA(Asn) + L-glutamine + ATP + H2O = L-asparaginyl-tRNA(Asn) + L-glutamate + ADP + phosphate + 2 H(+). Its function is as follows. Allows the formation of correctly charged Asn-tRNA(Asn) or Gln-tRNA(Gln) through the transamidation of misacylated Asp-tRNA(Asn) or Glu-tRNA(Gln) in organisms which lack either or both of asparaginyl-tRNA or glutaminyl-tRNA synthetases. The reaction takes place in the presence of glutamine and ATP through an activated phospho-Asp-tRNA(Asn) or phospho-Glu-tRNA(Gln). This chain is Aspartyl/glutamyl-tRNA(Asn/Gln) amidotransferase subunit C, found in Petrotoga mobilis (strain DSM 10674 / SJ95).